Here is a 176-residue protein sequence, read N- to C-terminus: Protein GrpE (176 aa).

The segment at Met1–Glu28 is disordered.

Belongs to the GrpE family. Homodimer.

It is found in the cytoplasm. Functionally, participates actively in the response to hyperosmotic and heat shock by preventing the aggregation of stress-denatured proteins, in association with DnaK and GrpE. It is the nucleotide exchange factor for DnaK and may function as a thermosensor. Unfolded proteins bind initially to DnaJ; upon interaction with the DnaJ-bound protein, DnaK hydrolyzes its bound ATP, resulting in the formation of a stable complex. GrpE releases ADP from DnaK; ATP binding to DnaK triggers the release of the substrate protein, thus completing the reaction cycle. Several rounds of ATP-dependent interactions between DnaJ, DnaK and GrpE are required for fully efficient folding. This Campylobacter jejuni subsp. jejuni serotype O:2 (strain ATCC 700819 / NCTC 11168) protein is Protein GrpE.